Here is a 345-residue protein sequence, read N- to C-terminus: Papain (345 aa).

An N-terminal signal peptide occupies residues 1–18; that stretch reads MAMIPSISKLLFVAICLF. The propeptide at 19 to 133 is activation peptide; sequence VYMGLSFGDF…EEVLNDGDVN (115 aa). 3 cysteine pairs are disulfide-bonded: C155/C196, C189/C228, and C286/C333. C158 is an active-site residue. E64 is bound at residue C158. C158 serves as a coordination point for leupeptin. Active-site residues include H292 and N308.

It belongs to the peptidase C1 family.

The catalysed reaction is Hydrolysis of proteins with broad specificity for peptide bonds, but preference for an amino acid bearing a large hydrophobic side chain at the P2 position. Does not accept Val in P1'.. With respect to regulation, repressed by the active-site-directed cysteine protease inhibitor E64 (L-trans-epoxysuccinyl-leucylamide-(4-guanido)-butane) produced by Aspergillus japonicus. Inhibited by the inhibitor of cysteine proteases from Trypanosoma brucei (TbICP, rhodesain) and Colocasia esculenta cv. Kaohsiung no. 1 (CeCPI, tarocystatin). Repressed by leupeptin, a peptidic cysteine, serine and threonine protease inhibitor. In terms of biological role, cysteine proteinase with a high level of diversity in substrate specificity, an amino acid bearing a large hydrophobic side chain at the P2 position is preferred. The sequence is that of Papain from Carica papaya (Papaya).